We begin with the raw amino-acid sequence, 202 residues long: Holliday junction branch migration complex subunit RuvA (202 aa).

The segment at 1-65 (MIGYLEGRVV…EDALELFGFA (65 aa)) is domain I. The segment at 66–144 (SLDDRETFRT…GRAPAAGLAP (79 aa)) is domain II. The tract at residues 145–155 (SVPIPGGVAGD) is flexible linker. A domain III region spans residues 155–202 (DVVAGLTNLGYPEPEARQVAAEVLEAEPDLDVAAALRQALKRLASAKK).

Belongs to the RuvA family. As to quaternary structure, homotetramer. Forms an RuvA(8)-RuvB(12)-Holliday junction (HJ) complex. HJ DNA is sandwiched between 2 RuvA tetramers; dsDNA enters through RuvA and exits via RuvB. An RuvB hexamer assembles on each DNA strand where it exits the tetramer. Each RuvB hexamer is contacted by two RuvA subunits (via domain III) on 2 adjacent RuvB subunits; this complex drives branch migration. In the full resolvosome a probable DNA-RuvA(4)-RuvB(12)-RuvC(2) complex forms which resolves the HJ.

The protein localises to the cytoplasm. In terms of biological role, the RuvA-RuvB-RuvC complex processes Holliday junction (HJ) DNA during genetic recombination and DNA repair, while the RuvA-RuvB complex plays an important role in the rescue of blocked DNA replication forks via replication fork reversal (RFR). RuvA specifically binds to HJ cruciform DNA, conferring on it an open structure. The RuvB hexamer acts as an ATP-dependent pump, pulling dsDNA into and through the RuvAB complex. HJ branch migration allows RuvC to scan DNA until it finds its consensus sequence, where it cleaves and resolves the cruciform DNA. This Solidesulfovibrio magneticus (strain ATCC 700980 / DSM 13731 / RS-1) (Desulfovibrio magneticus) protein is Holliday junction branch migration complex subunit RuvA.